A 326-amino-acid polypeptide reads, in one-letter code: MAVYTDVAADELADFLKAYDIGELLSYKGIAEGVENSNYLLHTTAGSFFLTLYEKRVAVDDLPFFLGLMGHLATHGIVCPQPVKARNGEALGCLAGRPAAIIDFLEGVWPRKPNVTHCAAVGAALAKLHLAGRDFPMRRANALSVSSWRPLFEQATPCIDTVQHGLHDFLKAELDHLERHWPQNLPAGVIHADLFPDNVLFLGDRLSGLIDFYFACNDFFAYDVAICLNAWCFEPDHSFNVTKARALLGAYNRERALSEAEQAALPLLARGAALRFLLTRLVDFLNVPAGALVKPKDPLEYVRKLRFQQSVGNIREYGVAASGLVA.

Belongs to the pseudomonas-type ThrB family.

It carries out the reaction L-homoserine + ATP = O-phospho-L-homoserine + ADP + H(+). It functions in the pathway amino-acid biosynthesis; L-threonine biosynthesis; L-threonine from L-aspartate: step 4/5. The polypeptide is Homoserine kinase (Nitrobacter hamburgensis (strain DSM 10229 / NCIMB 13809 / X14)).